Reading from the N-terminus, the 202-residue chain is Small ribosomal subunit protein uS4c (202 aa).

The 64-residue stretch at 90–153 (MRLDNIIFRL…KSETIISKNI (64 aa)) folds into the S4 RNA-binding domain.

The protein belongs to the universal ribosomal protein uS4 family. In terms of assembly, part of the 30S ribosomal subunit. Contacts protein S5. The interaction surface between S4 and S5 is involved in control of translational fidelity.

It is found in the plastid. The protein resides in the chloroplast. Its function is as follows. One of the primary rRNA binding proteins, it binds directly to 16S rRNA where it nucleates assembly of the body of the 30S subunit. With S5 and S12 plays an important role in translational accuracy. This is Small ribosomal subunit protein uS4c (rps4) from Catharomnion ciliatum (Moss).